Consider the following 192-residue polypeptide: Outer-membrane lipoprotein LolB (192 aa).

An N-terminal signal peptide occupies residues 1 to 17; sequence MTYRTLCILAFTALISA. C18 carries N-palmitoyl cysteine lipidation. C18 carries the S-diacylglycerol cysteine lipid modification.

This sequence belongs to the LolB family. As to quaternary structure, monomer.

It is found in the cell outer membrane. Plays a critical role in the incorporation of lipoproteins in the outer membrane after they are released by the LolA protein. This Marinomonas sp. (strain MWYL1) protein is Outer-membrane lipoprotein LolB.